The sequence spans 403 residues: MSEKGRLFTSESVTEGHPDKICDAISDSVLDALLAQDPRSRVAVETLVTTGQVHVVGEVTTTAKEAFADITNTVRERILDIGYDSSDKGFDGASCGVNIGIGAQSPDIAQGVDTAHETRVEGAADPLDAQGAGDQGLMFGYAINDTPERMPLPIALAHRLSRRLTEVRKNGVLPYLRPDGKTQVTIEFEDDVPVRLDTVVISTQHAADIDLENTLTPDIREKVLNTVLNDLAHDTLDTSSTRLLVNPTGKFVVGGPMGDAGLTGRKIIVDTYGGWARHGGGAFSGKDPSKVDRSAAYAMRWVAKNIVAAGLAERVEVQVAYAIGKAAPVGLFIETFGTATVDPVKIEKIVPEVFDLRPGAIIRDLDLLRPIYAQTAAYGHFGRTDVELPWEQLNKVDDLKRAI.

His17 provides a ligand contact to ATP. Position 19 (Asp19) interacts with Mg(2+). Residue Glu45 participates in K(+) binding. Residues Glu58 and Gln104 each contribute to the L-methionine site. Residues 104 to 114 (QSPDIAQGVDT) are flexible loop. ATP-binding positions include 179–181 (DGK), 250–251 (KF), Asp259, 265–266 (RK), Ala282, and Lys286. Residue Asp259 participates in L-methionine binding. Position 290 (Lys290) interacts with L-methionine.

Belongs to the AdoMet synthase family. As to quaternary structure, homotetramer; dimer of dimers. Mg(2+) serves as cofactor. It depends on K(+) as a cofactor.

Its subcellular location is the cytoplasm. The enzyme catalyses L-methionine + ATP + H2O = S-adenosyl-L-methionine + phosphate + diphosphate. The protein operates within amino-acid biosynthesis; S-adenosyl-L-methionine biosynthesis; S-adenosyl-L-methionine from L-methionine: step 1/1. Functionally, catalyzes the formation of S-adenosylmethionine (AdoMet) from methionine and ATP. The overall synthetic reaction is composed of two sequential steps, AdoMet formation and the subsequent tripolyphosphate hydrolysis which occurs prior to release of AdoMet from the enzyme. The chain is S-adenosylmethionine synthase from Mycobacterium avium (strain 104).